A 246-amino-acid polypeptide reads, in one-letter code: 1-(5-phosphoribosyl)-5-[(5-phosphoribosylamino)methylideneamino] imidazole-4-carboxamide isomerase (246 aa).

D8 serves as the catalytic Proton acceptor. D131 acts as the Proton donor in catalysis.

It belongs to the HisA/HisF family.

Its subcellular location is the cytoplasm. It catalyses the reaction 1-(5-phospho-beta-D-ribosyl)-5-[(5-phospho-beta-D-ribosylamino)methylideneamino]imidazole-4-carboxamide = 5-[(5-phospho-1-deoxy-D-ribulos-1-ylimino)methylamino]-1-(5-phospho-beta-D-ribosyl)imidazole-4-carboxamide. Its pathway is amino-acid biosynthesis; L-histidine biosynthesis; L-histidine from 5-phospho-alpha-D-ribose 1-diphosphate: step 4/9. The sequence is that of 1-(5-phosphoribosyl)-5-[(5-phosphoribosylamino)methylideneamino] imidazole-4-carboxamide isomerase from Delftia acidovorans (strain DSM 14801 / SPH-1).